The primary structure comprises 307 residues: N-acetylmuramic acid 6-phosphate etherase (307 aa).

The 164-residue stretch at 62–225 folds into the SIS domain; sequence VVDAFRVGGR…TTASMIRIGK (164 aa). The active-site Proton donor is the Glu-90. Glu-121 is a catalytic residue.

The protein belongs to the GCKR-like family. MurNAc-6-P etherase subfamily. Homodimer.

It carries out the reaction N-acetyl-D-muramate 6-phosphate + H2O = N-acetyl-D-glucosamine 6-phosphate + (R)-lactate. Its pathway is amino-sugar metabolism; 1,6-anhydro-N-acetylmuramate degradation. It participates in amino-sugar metabolism; N-acetylmuramate degradation. The protein operates within cell wall biogenesis; peptidoglycan recycling. Its function is as follows. Specifically catalyzes the cleavage of the D-lactyl ether substituent of MurNAc 6-phosphate, producing GlcNAc 6-phosphate and D-lactate. Together with AnmK, is also required for the utilization of anhydro-N-acetylmuramic acid (anhMurNAc) either imported from the medium or derived from its own cell wall murein, and thus plays a role in cell wall recycling. The sequence is that of N-acetylmuramic acid 6-phosphate etherase from Brucella anthropi (strain ATCC 49188 / DSM 6882 / CCUG 24695 / JCM 21032 / LMG 3331 / NBRC 15819 / NCTC 12168 / Alc 37) (Ochrobactrum anthropi).